The chain runs to 145 residues: Large ribosomal subunit protein uL15 (145 aa).

Residues 1–43 are disordered; sequence MRLNTIKPGAGSKSAAKRVGRGIGSGLGKTCGRGHKGQKSRAG. Residues 21–31 are compositionally biased toward gly residues; it reads RGIGSGLGKTC.

Belongs to the universal ribosomal protein uL15 family. In terms of assembly, part of the 50S ribosomal subunit.

Functionally, binds to the 23S rRNA. The sequence is that of Large ribosomal subunit protein uL15 from Aromatoleum aromaticum (strain DSM 19018 / LMG 30748 / EbN1) (Azoarcus sp. (strain EbN1)).